We begin with the raw amino-acid sequence, 805 residues long: N-(5-amino-5-carboxypentanoyl)-L-cysteinyl-D-valine synthase (805 aa).

Positions 783-805 (PDTGGGAVGSTTTGGVRGELREI) are disordered.

Belongs to the ATP-dependent AMP-binding enzyme family. The cofactor is pantetheine 4'-phosphate.

It catalyses the reaction L-2-aminoadipate + L-valine + L-cysteine + 3 ATP + H2O = N-[(5S)-5-amino-5-carboxypentanoyl]-L-cysteinyl-D-valine + 3 AMP + 3 diphosphate + 3 H(+). The protein operates within antibiotic biosynthesis; penicillin G biosynthesis; penicillin G from L-alpha-aminoadipate and L-cysteine and L-valine: step 1/3. Its function is as follows. Each of the constituent amino acids of ACV are activated as aminoacyl-adenylates with peptide bonds formed through the participation of amino acid thioester intermediates. In Streptomyces clavuligerus, this protein is N-(5-amino-5-carboxypentanoyl)-L-cysteinyl-D-valine synthase (pcbAB).